Reading from the N-terminus, the 192-residue chain is uncharacterized protein (192 aa).

The N-terminal stretch at 1–18 is a signal peptide; sequence MNSKFILKYFILAFFLVS. C19 is lipidated: N-palmitoyl cysteine. C19 is lipidated: S-diacylglycerol cysteine.

The protein localises to the cell membrane. This is an uncharacterized protein from Borreliella burgdorferi (strain ATCC 35210 / DSM 4680 / CIP 102532 / B31) (Borrelia burgdorferi).